The primary structure comprises 424 residues: Tyrosine--tRNA ligase (424 aa).

Y37 provides a ligand contact to L-tyrosine. A 'HIGH' region motif is present at residues 42-51 (PTADSLHLGH). At K144 the chain carries N6-acetyllysine. 2 residues coordinate L-tyrosine: Y175 and Q179. A 'KMSKS' region motif is present at residues 235 to 239 (KFGKT). K238 is an ATP binding site. Residues 357-414 (ADLMQALVDSELQPSRGQARKTIASNAITINGEKQSDPEYFFKEEDRLFGRFTLLRRG) form the S4 RNA-binding domain.

Belongs to the class-I aminoacyl-tRNA synthetase family. TyrS type 1 subfamily. In terms of assembly, homodimer.

The protein resides in the cytoplasm. The enzyme catalyses tRNA(Tyr) + L-tyrosine + ATP = L-tyrosyl-tRNA(Tyr) + AMP + diphosphate + H(+). In terms of biological role, catalyzes the attachment of tyrosine to tRNA(Tyr) in a two-step reaction: tyrosine is first activated by ATP to form Tyr-AMP and then transferred to the acceptor end of tRNA(Tyr). In Shigella flexneri serotype 5b (strain 8401), this protein is Tyrosine--tRNA ligase.